The following is a 433-amino-acid chain: MDSSAKTASAPDPFFAGTLAEADPEIAAAITGELGRQRHEIELIASENIVSRAVLEAQGSVMTNKYAEGYPGARYYGGCEWVDVAETLAIERAKKLFGARFANVQPNSGSQMNQAVFLALLQPGDTFMGLDLAAGGHLTHGAPVNMSGKWFKVAHYTVRRDDHLIDMDEVARRAEEVKPKLIIAGGSAYSRPWDFKRFREIADSVGAYLMVDMAHFAGLVAGGVHASPVPHAHVTTTTTHKSLRGPRGGLILCNDEALAKKFNSAIFPGLQGGPLMHVIAAKAVALGEALRPDFKIYAKNVVENARALAESLRGHGFDIVSGGTDNHLMLVDLRPKGLKGNVSEKALVRAGLTCNKNGIPFDPEKPFVTSGLRLGTPATTTRGFGVSEFKQVGGLIAEVLTAIAQAEDGKAPLVEAAVKEKVKALTDRFPIYQ.

(6S)-5,6,7,8-tetrahydrofolate-binding positions include Leu132 and 136 to 138 (GHL). N6-(pyridoxal phosphate)lysine is present on Lys241.

The protein belongs to the SHMT family. As to quaternary structure, homodimer. Pyridoxal 5'-phosphate serves as cofactor.

The protein localises to the cytoplasm. It catalyses the reaction (6R)-5,10-methylene-5,6,7,8-tetrahydrofolate + glycine + H2O = (6S)-5,6,7,8-tetrahydrofolate + L-serine. Its pathway is one-carbon metabolism; tetrahydrofolate interconversion. It functions in the pathway amino-acid biosynthesis; glycine biosynthesis; glycine from L-serine: step 1/1. Catalyzes the reversible interconversion of serine and glycine with tetrahydrofolate (THF) serving as the one-carbon carrier. This reaction serves as the major source of one-carbon groups required for the biosynthesis of purines, thymidylate, methionine, and other important biomolecules. Also exhibits THF-independent aldolase activity toward beta-hydroxyamino acids, producing glycine and aldehydes, via a retro-aldol mechanism. The chain is Serine hydroxymethyltransferase from Nitrobacter winogradskyi (strain ATCC 25391 / DSM 10237 / CIP 104748 / NCIMB 11846 / Nb-255).